The chain runs to 586 residues: Actin-related protein 9 (586 aa).

Residues 141-169 (STPIVDKDADVDPLQRSTPDDTEPNSEEN) are disordered.

This sequence belongs to the actin family. ARP8 subfamily.

This Oryza sativa subsp. japonica (Rice) protein is Actin-related protein 9 (ARP9).